A 242-amino-acid polypeptide reads, in one-letter code: Thaumatin-like protein 2 (242 aa).

A signal peptide spans 1–23 (MMKTLGAVLSLSLTLLSFGGAHA). 8 cysteine pairs are disulfide-bonded: cysteine 32/cysteine 241, cysteine 77/cysteine 87, cysteine 92/cysteine 99, cysteine 147/cysteine 230, cysteine 152/cysteine 213, cysteine 160/cysteine 176, cysteine 180/cysteine 189, and cysteine 190/cysteine 200.

It belongs to the thaumatin family. In terms of tissue distribution, preferentially expressed in the abscission zone of fruit. Also expressed in leaf abscission zone.

The protein resides in the secreted. Its function is as follows. May be involved in protecting plant tissues from pathogen infection. This chain is Thaumatin-like protein 2, found in Prunus persica (Peach).